The primary structure comprises 798 residues: Serine/threonine-protein kinase haspin (798 aa).

The interval 1 to 110 is disordered; that stretch reads MAASLPGPGS…WKLRARPSLT (110 aa). S58 bears the Phosphoserine mark. Positions 59–70 are enriched in acidic residues; sequence QSDDPDDPDDPD. The residue at position 93 (S93) is a Phosphoserine; by AURKB. Position 97 is a phosphothreonine (T97). Phosphoserine; by AURKB is present on S143. Phosphoserine is present on S147. A disordered region spans residues 275-350; it reads LVVGNGPEGP…KHQEATETSL (76 aa). Residues 300–315 are compositionally biased toward basic and acidic residues; that stretch reads CQERGLQEAVRREHQE. In terms of domain architecture, Protein kinase spans 484–798; it reads LQRCEKIGEG…DLLCQHSLFK (315 aa). ATP-binding positions include 490–498, K511, 606–611, 649–654, and 687–689; these read IGEGVFGEV, EFGGID, DLHWGN, and DYT. The active-site Proton acceptor is D649.

This sequence belongs to the protein kinase superfamily. Ser/Thr protein kinase family. Haspin subfamily. The cofactor is Mg(2+). In terms of processing, autophosphorylated on both serine and threonine residues. Strongly phosphorylated during mitosis but this does not appear to significantly affect its intrinsic kinase activity. Phosphorylation by AURKB is required for full activity toward histone H3 at 'Ser-3' in mitosis. In terms of tissue distribution, strongly expressed in testis. Also present in thymus and bone marrow and low levels observed in prostate, intestine, lung, spleen and lymph node. Expressed in fetal skin, liver, kidney and small intestine and also in proliferating but not non-proliferating cell lines.

The protein localises to the nucleus. The protein resides in the chromosome. It is found in the cytoplasm. Its subcellular location is the cytoskeleton. It localises to the spindle. The catalysed reaction is L-seryl-[protein] + ATP = O-phospho-L-seryl-[protein] + ADP + H(+). It catalyses the reaction L-threonyl-[protein] + ATP = O-phospho-L-threonyl-[protein] + ADP + H(+). With respect to regulation, constitutive activity that does not require phosphorylation. Specifically inhibited by 3-(1H-indazol-5-yl)-N-propylimidazo[1,2-b]pyridazin-6-amine (CHR-6494). In terms of biological role, serine/threonine-protein kinase that phosphorylates histone H3 at 'Thr-3' (H3T3ph) during mitosis. May act through H3T3ph to both position and modulate activation of AURKB and other components of the chromosomal passenger complex (CPC) at centromeres to ensure proper chromatid cohesion, metaphase alignment and normal progression through the cell cycle. The protein is Serine/threonine-protein kinase haspin of Homo sapiens (Human).